A 310-amino-acid polypeptide reads, in one-letter code: 4-hydroxyproline 2-epimerase (310 aa).

Cysteine 88 acts as the Proton acceptor in catalysis. Residues 89–90 (GH), histidine 208, and aspartate 232 each bind substrate. Cysteine 236 functions as the Proton donor in the catalytic mechanism. 237–238 (GT) provides a ligand contact to substrate.

The protein belongs to the proline racemase family.

It catalyses the reaction trans-4-hydroxy-L-proline = cis-4-hydroxy-D-proline. Functionally, catalyzes the epimerization of trans-4-hydroxy-L-proline (t4LHyp) to cis-4-hydroxy-D-proline (c4DHyp). Is likely involved in a degradation pathway that converts t4LHyp to alpha-ketoglutarate. Displays no proline racemase activity. The polypeptide is 4-hydroxyproline 2-epimerase (Acinetobacter baumannii (strain ATCC 17978 / DSM 105126 / CIP 53.77 / LMG 1025 / NCDC KC755 / 5377)).